A 300-amino-acid polypeptide reads, in one-letter code: Probable protein phosphatase 2C 2 (300 aa).

The PPM-type phosphatase domain occupies 23–298 (IFAASEMQGW…DNMTTILVYL (276 aa)). Asp57, Gly58, Asp237, and Asp289 together coordinate Mn(2+).

This sequence belongs to the PP2C family. Mg(2+) serves as cofactor. Mn(2+) is required as a cofactor.

It is found in the membrane. It catalyses the reaction O-phospho-L-seryl-[protein] + H2O = L-seryl-[protein] + phosphate. It carries out the reaction O-phospho-L-threonyl-[protein] + H2O = L-threonyl-[protein] + phosphate. Functionally, enzyme with a broad specificity. The protein is Probable protein phosphatase 2C 2 of Paramecium tetraurelia.